Here is a 61-residue protein sequence, read N- to C-terminus: Metallothionein-1A (61 aa).

An N-acetylmethionine modification is found at Met1. The interval 1–29 (MDPNCSCPTGGSCSCAGSCTCKACRCPSC) is beta. Residues Cys5, Cys7, Cys13, Cys15, Cys19, Cys21, Cys24, Cys26, Cys29, Cys33, Cys34, Cys36, Cys37, Cys41, Cys44, Cys48, Cys50, and Cys57 each coordinate a divalent metal cation. The interval 30–61 (KKSCCSCCPVGCAKCAQGCVCKGASDKCSCCA) is alpha. Ser58 carries the post-translational modification Phosphoserine. Residues Cys59 and Cys60 each coordinate a divalent metal cation.

Belongs to the metallothionein superfamily. Type 1 family. Monomer.

Functionally, metallothioneins have a high content of cysteine residues that bind various heavy metals; these proteins are transcriptionally regulated by both heavy metals and glucocorticoids. This chain is Metallothionein-1A (MT1A), found in Bos taurus (Bovine).